A 58-amino-acid polypeptide reads, in one-letter code: Small integral membrane protein 11 (58 aa).

The chain crosses the membrane as a helical span at residues 10–32 (PLLLYILAAKTLILCLTFAGVKM). Residues 29–58 (GVKMYQRKRLEAKQQKLEAERKKQSEKKDN) adopt a coiled-coil conformation.

Expressed in heart, spleen, liver, stomach, muscle, lung, testis, skin, PBL and bone marrow.

The protein localises to the membrane. The sequence is that of Small integral membrane protein 11 from Homo sapiens (Human).